A 173-amino-acid polypeptide reads, in one-letter code: Oleosin 18.5 kDa (173 aa).

The interval 1–45 (MADTARGTHHDIIGRDQYPMMGRDRDQYQMSGRGSDYSKSRQIAK) is polar. A hydrophobic region spans residues 46-117 (AATAVTAGGS…AAITVFSWIY (72 aa)). The next 3 helical transmembrane spans lie at 54-74 (GSLLVLSSLTLVGTVIALTVA), 76-96 (PLLVIFSPILVPALITVALLI), and 97-117 (TGFLSSGGFGIAAITVFSWIY). The interval 151–173 (YYGQQHTGGEHDRDRTRGGQHTT) is disordered. The span at 158 to 167 (GGEHDRDRTR) shows a compositional bias: basic and acidic residues.

The protein belongs to the oleosin family.

It is found in the lipid droplet. The protein localises to the membrane. In terms of biological role, may have a structural role to stabilize the lipid body during desiccation of the seed by preventing coalescence of the oil. Probably interacts with both lipid and phospholipid moieties of lipid bodies. May also provide recognition signals for specific lipase anchorage in lipolysis during seedling growth. The sequence is that of Oleosin 18.5 kDa from Arabidopsis thaliana (Mouse-ear cress).